The chain runs to 355 residues: MSFFIASSPHAHSRKSTPDLMKWVALCALPGLLAQTYFFGWGTLVQLILAITIALSLEALVMLFRKRPPMRALRDHSALVTAWLLAVAIPPMAPWWIITIGLLFAIVIAKHLYGGLGQNPFNPAMIAYVVLLISFPVQMTSWSAPLPLIEAGHEVAKDPVTFGDLLSLIFTGLTIDGSSLQQVRAGIDGITTATPLDAFKTGLHSGATSSEILSQPIFEGFAGVGWQWVNLAYLAGGLILLKQRVIQWHIPVGFLGALLVMSSFFSLFFPGETASPLFHLLSGATMLGAFFIATDPVSASTTIKGRILFGAIIGTLVFIIRSWGGFPDGVAFAVLLANMCVPLIDYYTKPRTYGH.

Transmembrane regions (helical) follow at residues 23-43, 44-64, 78-109, and 129-149; these read WVAL…GWGT, LVQL…VMLF, ALVT…IVIA, and VVLL…LPLI. T194 carries the FMN phosphoryl threonine modification. The next 5 helical transmembrane spans lie at 221 to 241, 250 to 270, 273 to 293, 307 to 327, and 328 to 348; these read FAGV…LILL, IPVG…LFFP, TASP…FFIA, ILFG…GGFP, and DGVA…DYYT.

The protein belongs to the NqrB/RnfD family. As to quaternary structure, the complex is composed of six subunits: RnfA, RnfB, RnfC, RnfD, RnfE and RnfG. FMN serves as cofactor.

It is found in the cell inner membrane. Its function is as follows. Part of a membrane-bound complex that couples electron transfer with translocation of ions across the membrane. The polypeptide is Ion-translocating oxidoreductase complex subunit D (Vibrio vulnificus (strain CMCP6)).